The sequence spans 556 residues: 2-succinyl-5-enolpyruvyl-6-hydroxy-3-cyclohexene-1-carboxylate synthase (556 aa).

This sequence belongs to the TPP enzyme family. MenD subfamily. Homodimer. The cofactor is Mg(2+). Mn(2+) is required as a cofactor. Thiamine diphosphate serves as cofactor.

The enzyme catalyses isochorismate + 2-oxoglutarate + H(+) = 5-enolpyruvoyl-6-hydroxy-2-succinyl-cyclohex-3-ene-1-carboxylate + CO2. It participates in quinol/quinone metabolism; 1,4-dihydroxy-2-naphthoate biosynthesis; 1,4-dihydroxy-2-naphthoate from chorismate: step 2/7. The protein operates within quinol/quinone metabolism; menaquinone biosynthesis. In terms of biological role, catalyzes the thiamine diphosphate-dependent decarboxylation of 2-oxoglutarate and the subsequent addition of the resulting succinic semialdehyde-thiamine pyrophosphate anion to isochorismate to yield 2-succinyl-5-enolpyruvyl-6-hydroxy-3-cyclohexene-1-carboxylate (SEPHCHC). This is 2-succinyl-5-enolpyruvyl-6-hydroxy-3-cyclohexene-1-carboxylate synthase from Escherichia coli (strain K12 / MC4100 / BW2952).